The chain runs to 778 residues: Centromere/kinetochore protein zw10 homolog (778 aa).

Residues 47-99 adopt a coiled-coil conformation; sequence FDRLENLEDIAEMSTRNLSNLIDQTAKDSPEMLAEIKSQAQSCENLVEFLQSM.

The protein belongs to the ZW10 family. In terms of assembly, component of the RZZ complex composed of rod-1, czw-1 and zwl-1.

It localises to the chromosome. The protein localises to the centromere. It is found in the kinetochore. Its subcellular location is the cytoplasm. The protein resides in the cytoskeleton. It localises to the spindle. Essential component of the mitotic checkpoint, which prevents cells from prematurely exiting mitosis. Required for the assembly of the dynein-dynactin and mdf-1-mdf-2 complexes onto kinetochores. Its function related to the spindle assembly machinery and kinetochore-microtubule attachments likely depends on its association in the mitotic RZZ complex. The RZZ complex recruits the spindly-like protein spdl-1 to kinetochores. To prevent irregular chromosome segregation, the complex also inhibits the attachment of the kinetochore-associated NDC80 complex to microtubules. The recruitment of spdl-1 to kinetochores relieves this inhibition. Required for embryonic development. This Caenorhabditis elegans protein is Centromere/kinetochore protein zw10 homolog.